The sequence spans 177 residues: NAD(P)H-quinone oxidoreductase subunit 6, chloroplastic (177 aa).

The next 5 membrane-spanning stretches (helical) occupy residues 10–30 (IFLV…VLLT), 32–52 (PVYS…FHIP), 61–81 (AQLL…VMFM), 92–112 (LWTV…FSLI), and 152–172 (FYLP…GAIA).

Belongs to the complex I subunit 6 family. NDH is composed of at least 16 different subunits, 5 of which are encoded in the nucleus.

Its subcellular location is the plastid. It localises to the chloroplast thylakoid membrane. The catalysed reaction is a plastoquinone + NADH + (n+1) H(+)(in) = a plastoquinol + NAD(+) + n H(+)(out). The enzyme catalyses a plastoquinone + NADPH + (n+1) H(+)(in) = a plastoquinol + NADP(+) + n H(+)(out). Functionally, NDH shuttles electrons from NAD(P)H:plastoquinone, via FMN and iron-sulfur (Fe-S) centers, to quinones in the photosynthetic chain and possibly in a chloroplast respiratory chain. The immediate electron acceptor for the enzyme in this species is believed to be plastoquinone. Couples the redox reaction to proton translocation, and thus conserves the redox energy in a proton gradient. This Illicium oligandrum (Star anise) protein is NAD(P)H-quinone oxidoreductase subunit 6, chloroplastic (ndhG).